A 366-amino-acid chain; its full sequence is Inactive PGL/p-HBAD biosynthesis glycosyltransferase Mb2982c (366 aa).

Disordered regions lie at residues 1–23 and 295–366; these read MEET…PNAA and DGDR…HGGP. The segment covering 295–311 has biased composition (basic and acidic residues); that stretch reads DGDRGHRWPEPPEERAG.

Belongs to the UDP-glycosyltransferase family.

The polypeptide is Inactive PGL/p-HBAD biosynthesis glycosyltransferase Mb2982c (Mycobacterium bovis (strain ATCC BAA-935 / AF2122/97)).